The sequence spans 360 residues: Mitogen-activated protein kinase 1 (360 aa).

N-acetylalanine is present on alanine 2. In terms of domain architecture, Protein kinase spans 25-313 (YTNLSYIGEG…VEQALAHPYL (289 aa)). Serine 29 bears the Phosphoserine; by SGK1 mark. ATP-binding positions include 31 to 39 (IGEGAYGMV) and lysine 54. Aspartate 149 (proton acceptor) is an active-site residue. Threonine 185 carries the post-translational modification Phosphothreonine; by MAP2K1 and MAP2K2. The short motif at 185–187 (TEY) is the TXY element. Tyrosine 187 carries the phosphotyrosine; by MAP2K1 and MAP2K2 modification. Phosphothreonine; by autocatalysis is present on threonine 190. Phosphoserine occurs at positions 246 and 248. A DNA-binding region spans residues 259 to 277 (KARNYLLSLPHKNKVPWNR). Serine 284 carries the phosphoserine modification. The Cytoplasmic retention motif signature appears at 318 to 322 (DPSDE). Positions 327–333 (APFKFDM) match the Nuclear translocation motif motif.

This sequence belongs to the protein kinase superfamily. CMGC Ser/Thr protein kinase family. MAP kinase subfamily. As to quaternary structure, binds both upstream activators and downstream substrates in multimolecular complexes. This interaction inhibits its tyrosine-kinase activity. Interacts with ADAM15, ARHGEF2, ARRB2, DAPK1 (via death domain), HSF4, IER3, IPO7, NISCH, SGK1, and isoform 1 of NEK2. Interacts (via phosphorylated form) with TPR (via C-terminal region and phosphorylated form); the interaction requires dimerization of MAPK1/ERK2 and increases following EGF stimulation. Interacts with MAP2K1. Interacts with DUSP6. Interacts (phosphorylated form) with CAV2 ('Tyr-19'-phosphorylated form); the interaction, promoted by insulin, leads to nuclear location and MAPK1 activation. Interacts with MORG1, PEA15 and MKNK2. MKNK2 isoform 1 binding prevents from dephosphorylation and inactivation. Interacts with DCC. The phosphorylated form interacts with PML (isoform PML-4). Interacts with STYX. Interacts with CDK2AP2. Interacts with CAVIN4. Interacts with DUSP7; the interaction enhances DUSP7 phosphatase activity. Interacts with GIT1; this interaction is necessary for MAPK1 localization to focal adhesions. Interacts with ZNF263. Interacts with phosphoglycerate kinase PGK1; the interaction is direct, occurs under hypoxic conditions, and promotes interaction between PGK1 and PIN1. (Microbial infection) Interacts with HIV-1 Nef through its SH3 domain. Requires Mg(2+) as cofactor. In terms of processing, phosphorylated upon KIT and FLT3 signaling. Dually phosphorylated on Thr-185 and Tyr-187, which activates the enzyme. Undergoes regulatory phosphorylation on additional residues such as Ser-246 and Ser-248 in the kinase insert domain (KID) These phosphorylations, which are probably mediated by more than one kinase, are important for binding of MAPK1/ERK2 to importin-7 (IPO7) and its nuclear translocation. In addition, autophosphorylation of Thr-190 was shown to affect the subcellular localization of MAPK1/ERK2 as well. Ligand-activated ALK induces tyrosine phosphorylation. Dephosphorylated by PTPRJ at Tyr-187. Phosphorylation on Ser-29 by SGK1 results in its activation by enhancing its interaction with MAP2K1/MEK1 and MAP2K2/MEK2. DUSP3 and DUSP6 dephosphorylate specifically MAPK1/ERK2 and MAPK3/ERK1 whereas DUSP9 dephosphorylates a broader range of MAPKs. Dephosphorylated by DUSP1 and DUSP2 at Thr-185 and Tyr-187. ISGylated. Post-translationally, ubiquitinated by TRIM15 via 'Lys-63'-linked ubiquitination; leading to activation. Deubiquitinated by CYLD.

The protein localises to the cytoplasm. Its subcellular location is the cytoskeleton. It localises to the spindle. It is found in the nucleus. The protein resides in the microtubule organizing center. The protein localises to the centrosome. Its subcellular location is the membrane. It localises to the caveola. It is found in the cell junction. The protein resides in the focal adhesion. It catalyses the reaction L-seryl-[protein] + ATP = O-phospho-L-seryl-[protein] + ADP + H(+). It carries out the reaction L-threonyl-[protein] + ATP = O-phospho-L-threonyl-[protein] + ADP + H(+). With respect to regulation, phosphorylated by MAP2K1/MEK1 and MAP2K2/MEK2 on Thr-185 and Tyr-187 in response to external stimuli like insulin or NGF. Both phosphorylations are required for activity. This phosphorylation causes dramatic conformational changes, which enable full activation and interaction of MAPK1/ERK2 with its substrates. Phosphorylation on Ser-29 by SGK1 results in its activation by enhancing its interaction with MAP2K1/MEK1 and MAP2K2/MEK2. Dephosphorylated and inactivated by DUSP1, DUSP3, DUSP6 and DUSP9. Inactivated by pyrimidylpyrrole inhibitors. Its function is as follows. Serine/threonine kinase which acts as an essential component of the MAP kinase signal transduction pathway. MAPK1/ERK2 and MAPK3/ERK1 are the 2 MAPKs which play an important role in the MAPK/ERK cascade. They participate also in a signaling cascade initiated by activated KIT and KITLG/SCF. Depending on the cellular context, the MAPK/ERK cascade mediates diverse biological functions such as cell growth, adhesion, survival and differentiation through the regulation of transcription, translation, cytoskeletal rearrangements. The MAPK/ERK cascade also plays a role in initiation and regulation of meiosis, mitosis, and postmitotic functions in differentiated cells by phosphorylating a number of transcription factors. About 160 substrates have already been discovered for ERKs. Many of these substrates are localized in the nucleus, and seem to participate in the regulation of transcription upon stimulation. However, other substrates are found in the cytosol as well as in other cellular organelles, and those are responsible for processes such as translation, mitosis and apoptosis. Moreover, the MAPK/ERK cascade is also involved in the regulation of the endosomal dynamics, including lysosome processing and endosome cycling through the perinuclear recycling compartment (PNRC); as well as in the fragmentation of the Golgi apparatus during mitosis. The substrates include transcription factors (such as ATF2, BCL6, ELK1, ERF, FOS, HSF4 or SPZ1), cytoskeletal elements (such as CANX, CTTN, GJA1, MAP2, MAPT, PXN, SORBS3 or STMN1), regulators of apoptosis (such as BAD, BTG2, CASP9, DAPK1, IER3, MCL1 or PPARG), regulators of translation (such as EIF4EBP1 and FXR1) and a variety of other signaling-related molecules (like ARHGEF2, DCC, FRS2 or GRB10). Protein kinases (such as RAF1, RPS6KA1/RSK1, RPS6KA3/RSK2, RPS6KA2/RSK3, RPS6KA6/RSK4, SYK, MKNK1/MNK1, MKNK2/MNK2, RPS6KA5/MSK1, RPS6KA4/MSK2, MAPKAPK3 or MAPKAPK5) and phosphatases (such as DUSP1, DUSP4, DUSP6 or DUSP16) are other substrates which enable the propagation the MAPK/ERK signal to additional cytosolic and nuclear targets, thereby extending the specificity of the cascade. Mediates phosphorylation of TPR in response to EGF stimulation. May play a role in the spindle assembly checkpoint. Phosphorylates PML and promotes its interaction with PIN1, leading to PML degradation. Phosphorylates CDK2AP2. Phosphorylates phosphoglycerate kinase PGK1 under hypoxic conditions to promote its targeting to the mitochondrion and suppress the formation of acetyl-coenzyme A from pyruvate. In terms of biological role, acts as a transcriptional repressor. Binds to a [GC]AAA[GC] consensus sequence. Repress the expression of interferon gamma-induced genes. Seems to bind to the promoter of CCL5, DMP1, IFIH1, IFITM1, IRF7, IRF9, LAMP3, OAS1, OAS2, OAS3 and STAT1. Transcriptional activity is independent of kinase activity. The sequence is that of Mitogen-activated protein kinase 1 from Homo sapiens (Human).